The sequence spans 127 residues: Thioredoxin-3, mitochondrial (127 aa).

A mitochondrion-targeting transit peptide spans 1-21 (MLFYKPVMRMAVRPLKSIRFQ). The region spanning 22–127 (SSYTSITKLT…TALEKGIKDL (106 aa)) is the Thioredoxin domain. Catalysis depends on nucleophile residues cysteine 55 and cysteine 58. Residues cysteine 55 and cysteine 58 are joined by a disulfide bond.

The protein belongs to the thioredoxin family.

It localises to the mitochondrion. This chain is Thioredoxin-3, mitochondrial (TRX3), found in Saccharomyces cerevisiae (strain ATCC 204508 / S288c) (Baker's yeast).